Reading from the N-terminus, the 110-residue chain is Transmembrane protein 233 (110 aa).

The segment at 1-32 is disordered; the sequence is MSQYASRSDSKGALDSSSPEAYTEDDKTEEDI. Topologically, residues 1–42 are cytoplasmic; that stretch reads MSQYASRSDSKGALDSSSPEAYTEDDKTEEDIPAPSNYLWLT. Residues 22–32 are compositionally biased toward acidic residues; it reads YTEDDKTEEDI. The helical intramembrane region spans 43-63; it reads IISCFCPAYPVNIVALVFSIM. The Cytoplasmic segment spans residues 64-85; sequence SLNSYNDGDYEGARRLGRNAKW. A helical membrane pass occupies residues 86–106; the sequence is VAIASIIIGLVIIGVSCAVHF. At 107-110 the chain is on the extracellular side; the sequence is SRNP.

Belongs to the CD225/Dispanin family. In terms of assembly, interacts with the giant stinging tree toxin ExTxA (P0DQP3). Interacts with Nav1.7/SCN9A. Interacts with Nav1.1/SCN1A, Nav1.2/SCN2A, Nav1.3/SCN3A, Nav1.4/SCN4A, Nav1.5/SCN5A, and Nav1.6/SCN8A. In terms of tissue distribution, probably expressed in nociceptive neurons. Detected in dorsal root ganglion neurons.

The protein resides in the membrane. Its function is as follows. Probable accessory protein of voltage-gated sodium channels. This is Transmembrane protein 233 from Mus musculus (Mouse).